The following is a 249-amino-acid chain: ATP synthase subunit a (249 aa).

A run of 5 helical transmembrane segments spans residues 33-53 (GQVFLTSWFVIAALVVLSLLA), 92-112 (VPFIGTLFLFIFLSNWSGALI), 131-151 (INTTVALALLTSLAYFYAGFS), 196-216 (LVVAVLVLLVPLFVPLPAMIL), and 217-237 (GLFTSAIQALIFATLAASYIG).

This sequence belongs to the ATPase A chain family. F-type ATPases have 2 components, CF(1) - the catalytic core - and CF(0) - the membrane proton channel. CF(1) has five subunits: alpha(3), beta(3), gamma(1), delta(1), epsilon(1). CF(0) has four main subunits: a, b, b' and c.

The protein resides in the cellular thylakoid membrane. Key component of the proton channel; it plays a direct role in the translocation of protons across the membrane. In Synechococcus elongatus (strain ATCC 33912 / PCC 7942 / FACHB-805) (Anacystis nidulans R2), this protein is ATP synthase subunit a.